A 149-amino-acid polypeptide reads, in one-letter code: Large ribosomal subunit protein bL9 (149 aa).

The protein belongs to the bacterial ribosomal protein bL9 family.

Its function is as follows. Binds to the 23S rRNA. The chain is Large ribosomal subunit protein bL9 from Haemophilus influenzae (strain PittEE).